A 94-amino-acid polypeptide reads, in one-letter code: MHITEVLKKPVLTEKSFAGHKDNVYTFLVDKKANKVQIKKTFEEIFEVKVESVRTINYDAKEKRLGKYVGKKPSYKKAIITLKEGQKLDVLSDL.

It belongs to the universal ribosomal protein uL23 family. Part of the 50S ribosomal subunit. Contacts protein L29, and trigger factor when it is bound to the ribosome.

Its function is as follows. One of the early assembly proteins it binds 23S rRNA. One of the proteins that surrounds the polypeptide exit tunnel on the outside of the ribosome. Forms the main docking site for trigger factor binding to the ribosome. In Mycoplasma mycoides subsp. mycoides SC (strain CCUG 32753 / NCTC 10114 / PG1), this protein is Large ribosomal subunit protein uL23.